Here is a 346-residue protein sequence, read N- to C-terminus: Anthocyanidin 3-O-glucosyltransferase 2 (346 aa).

7 residues coordinate UDP-alpha-D-glucose: Ala-221, Gln-223, His-238, Trp-241, Asn-242, Ser-243, and Glu-246. Position 261 (Ala-261) interacts with an anthocyanidin. 2 residues coordinate UDP-alpha-D-glucose: Glu-262 and Gln-263.

Belongs to the UDP-glycosyltransferase family. As to expression, expressed in cotyledons, roots and leaves.

It carries out the reaction an anthocyanidin + UDP-alpha-D-glucose + H(+) = an anthocyanidin 3-O-beta-D-glucoside + UDP. It functions in the pathway pigment biosynthesis; anthocyanin biosynthesis. Functionally, in the presence of other necessary color factors, this glycosylation reaction allows the accumulation of anthocyanin pigments. The chain is Anthocyanidin 3-O-glucosyltransferase 2 (GT2) from Manihot esculenta (Cassava).